The following is a 505-amino-acid chain: Maturase K (505 aa).

It belongs to the intron maturase 2 family. MatK subfamily.

It is found in the plastid. The protein localises to the chloroplast. In terms of biological role, usually encoded in the trnK tRNA gene intron. Probably assists in splicing its own and other chloroplast group II introns. The sequence is that of Maturase K from Ficus carica (Common fig).